A 105-amino-acid chain; its full sequence is UPF0145 protein HD_1349 (105 aa).

This sequence belongs to the UPF0145 family.

This chain is UPF0145 protein HD_1349, found in Haemophilus ducreyi (strain 35000HP / ATCC 700724).